We begin with the raw amino-acid sequence, 456 residues long: Phosphomannomutase (456 aa).

S98 (phosphoserine intermediate) is an active-site residue. Mg(2+) is bound by residues S98, D245, D247, and D249.

Belongs to the phosphohexose mutase family. It depends on Mg(2+) as a cofactor.

It carries out the reaction alpha-D-mannose 1-phosphate = D-mannose 6-phosphate. Its pathway is nucleotide-sugar biosynthesis; GDP-alpha-D-mannose biosynthesis; alpha-D-mannose 1-phosphate from D-fructose 6-phosphate: step 2/2. It functions in the pathway bacterial outer membrane biogenesis; LPS O-antigen biosynthesis. Involved in GDP-mannose biosynthesis which serves as the activated sugar nucleotide precursor for mannose residues in cell surface polysaccharides. This enzyme participates in synthesis of the LPS O antigen. In Salmonella montevideo, this protein is Phosphomannomutase (manB).